Here is a 506-residue protein sequence, read N- to C-terminus: MEKFQSYLGLDRSQQHHFLYPLIFQEYIYVLAHDHGLTRSILLENAGYDNKSSLLIVKRLINRMYQQNHLILSVNNSKQTPFLGHNKNFYSQVMSEVSSIIMEIPLSLRLISYLERKGVVKSDNLRSIHSIFSFLEDNFSHLNYVLDILIPYPAHLEILVQALRYWIKDASSLHLLRFFLHECHNWDSLITSNSKKASSSFSKRNHRLFFFLYTSHLCEYESGFLFLRNQSSHLRSTSSGALIERIYFYGKIDHLAEVFARAFQANLWLFKDPFMHYVRYQGKSILGSKGTFLLMNKWKYYFVNFWKSYFYLWSQPGRIYINQLSNHSLDFLGYRSSVRLKPSMVRSQMLENAFIIENAIKKFETIVPIMPLIGSLAKSKFCNALGHPIGKAIWADFSDSDIIDRFGRIYRNLSHYHSGSSKKKSLYRVKYILRLSCARTLARKHKSTVRAFLKRFGSELLEEFFTEEEQVFSLTFPRVSSISRRLSRRRIWYLDIICINDLANHE.

It belongs to the intron maturase 2 family. MatK subfamily.

Its subcellular location is the plastid. The protein resides in the chloroplast. Its function is as follows. Usually encoded in the trnK tRNA gene intron. Probably assists in splicing its own and other chloroplast group II introns. In Lactuca sativa (Garden lettuce), this protein is Maturase K.